The sequence spans 487 residues: Betaine aldehyde dehydrogenase (487 aa).

The K(+) site is built by I27 and D93. 149-151 contributes to the NAD(+) binding site; that stretch reads GAW. K161 serves as the catalytic Charge relay system. NAD(+)-binding positions include 175–178 and 228–231; these read KPSE and SVPT. L243 serves as a coordination point for K(+). The Proton acceptor role is filled by E249. Positions 251, 283, and 384 each coordinate NAD(+). Catalysis depends on C283, which acts as the Nucleophile. The residue at position 283 (C283) is a Cysteine sulfenic acid (-SOH). K(+) is bound by residues K454 and G457. Catalysis depends on E461, which acts as the Charge relay system.

It belongs to the aldehyde dehydrogenase family. As to quaternary structure, dimer of dimers. Requires K(+) as cofactor.

It catalyses the reaction betaine aldehyde + NAD(+) + H2O = glycine betaine + NADH + 2 H(+). Its pathway is amine and polyamine biosynthesis; betaine biosynthesis via choline pathway; betaine from betaine aldehyde: step 1/1. In terms of biological role, involved in the biosynthesis of the osmoprotectant glycine betaine. Catalyzes the irreversible oxidation of betaine aldehyde to the corresponding acid. This is Betaine aldehyde dehydrogenase from Brucella abortus (strain S19).